The following is a 743-amino-acid chain: Peptide transporter family 1 (743 aa).

Positions 1-28 are disordered; sequence MASEITNGKNGQNGKNGQKEESDSQIAP. Residues 7 to 16 show a composition bias toward low complexity; it reads NGKNGQNGKN. 10 helical membrane passes run 74-94, 104-124, 132-152, 173-193, 207-227, 334-354, 364-384, 597-619, 629-649, and 659-679; these read VLFHTFTMLVYIFPLIGALIA, ILYLSLVYSLGAMVVSFGAVP, AVTVVGLLLIAIGTGGIKPCV, FSLFYFAINAGSLISTTFTPI, FSLAFGVPAILMIFSVIIFMA, VVNPLLILGFLPLFDYIIYPA, LQKLTLGLLLAALGFFLSAGL, LPQIVVMTAAEVMFSVTGLEFSY, VLQACWLLSVAIGNMLVVVIA, and GEFTLFASLMLVDMMIFLWLA.

It belongs to the major facilitator superfamily. Proton-dependent oligopeptide transporter (POT/PTR) (TC 2.A.17) family. Expressed in thorax and abdomen of females: apical epithelial membranes of midgut, rectum, and reproductive tract. Also expressed in neuropil of the central nervous system, with elevated expression within the alpha- and beta-lobes of the mushroom bodies.

It localises to the membrane. Functionally, important role in absorption of dietary peptides. High-affinity transporter of alanylalanine. Dipeptide transport activity is proton dependent. This chain is Peptide transporter family 1 (yin), found in Drosophila melanogaster (Fruit fly).